The primary structure comprises 144 residues: Prefoldin subunit alpha (144 aa).

It belongs to the prefoldin alpha subunit family. As to quaternary structure, heterohexamer of two alpha and four beta subunits.

The protein resides in the cytoplasm. In terms of biological role, molecular chaperone capable of stabilizing a range of proteins. Seems to fulfill an ATP-independent, HSP70-like function in archaeal de novo protein folding. The polypeptide is Prefoldin subunit alpha (Metallosphaera sedula (strain ATCC 51363 / DSM 5348 / JCM 9185 / NBRC 15509 / TH2)).